The primary structure comprises 197 residues: MNLVPMVVEQTGRGERAYDIYSRLLKERIIFVTGPIEDEMASLIVAQLVFLEAEDPEKDISMYINSPGGVVTAGLSIYDTMQYIKPNVATLCLGQAASMGSLLLCAGAPGMRCALPNSRVMIHQPSGGFRGQATDIEIHAREILEIKRRLNEIFVRHTGKSLEEIESSMERDNFMIAEKARDFGIIDKVIEKRIEEK.

The Nucleophile role is filled by Ser-98. His-123 is a catalytic residue.

The protein belongs to the peptidase S14 family. Fourteen ClpP subunits assemble into 2 heptameric rings which stack back to back to give a disk-like structure with a central cavity, resembling the structure of eukaryotic proteasomes.

The protein localises to the cytoplasm. The enzyme catalyses Hydrolysis of proteins to small peptides in the presence of ATP and magnesium. alpha-casein is the usual test substrate. In the absence of ATP, only oligopeptides shorter than five residues are hydrolyzed (such as succinyl-Leu-Tyr-|-NHMec, and Leu-Tyr-Leu-|-Tyr-Trp, in which cleavage of the -Tyr-|-Leu- and -Tyr-|-Trp bonds also occurs).. Cleaves peptides in various proteins in a process that requires ATP hydrolysis. Has a chymotrypsin-like activity. Plays a major role in the degradation of misfolded proteins. The polypeptide is ATP-dependent Clp protease proteolytic subunit (Anaplasma phagocytophilum (strain HZ)).